Here is a 116-residue protein sequence, read N- to C-terminus: NADH-ubiquinone oxidoreductase chain 3 (116 aa).

Transmembrane regions (helical) follow at residues 3–23, 56–76, and 85–105; these read LVIS…VVSF, FFLV…LLAL, and ATGT…GLIY.

It belongs to the complex I subunit 3 family.

The protein resides in the mitochondrion membrane. The enzyme catalyses a ubiquinone + NADH + 5 H(+)(in) = a ubiquinol + NAD(+) + 4 H(+)(out). Core subunit of the mitochondrial membrane respiratory chain NADH dehydrogenase (Complex I) that is believed to belong to the minimal assembly required for catalysis. Complex I functions in the transfer of electrons from NADH to the respiratory chain. The immediate electron acceptor for the enzyme is believed to be ubiquinone. In Formosania lacustris (Oriental stream loach), this protein is NADH-ubiquinone oxidoreductase chain 3 (MT-ND3).